Consider the following 107-residue polypeptide: UPF0060 membrane protein A1S_1909 (107 aa).

Helical transmembrane passes span 2 to 22, 28 to 48, 56 to 76, and 85 to 105; these read FGLF…PYLI, SAWL…LLTL, IYAA…RFVD, and ILGG…PQGL.

It belongs to the UPF0060 family.

It is found in the cell inner membrane. The polypeptide is UPF0060 membrane protein A1S_1909 (Acinetobacter baumannii (strain ATCC 17978 / DSM 105126 / CIP 53.77 / LMG 1025 / NCDC KC755 / 5377)).